Consider the following 105-residue polypeptide: Thioredoxin (105 aa).

A Thioredoxin domain is found at 2-105 (VKQIESKSAF…KLEATINELL (104 aa)). Lys3 bears the N6-acetyllysine mark. Position 8 is an N6-succinyllysine (Lys8). Catalysis depends on nucleophile residues Cys32 and Cys35. A disulfide bridge links Cys32 with Cys35. Lys39 carries the N6-acetyllysine modification. Residues Cys62 and Cys69 each carry the S-nitrosocysteine modification. Cys73 bears the S-nitrosocysteine; alternate mark. Lys94 bears the N6-acetyllysine; alternate mark. Lys94 bears the N6-succinyllysine; alternate mark.

This sequence belongs to the thioredoxin family. As to quaternary structure, homodimer; disulfide-linked. Interacts with TXNIP through the redox-active site. Interacts with MAP3K5 and CASP3. Interacts with APEX1; the interaction stimulates the FOS/JUN AP-1 DNA-binding activity in a redox-dependent manner. Post-translationally, in the fully reduced protein, both Cys-69 and Cys-73 are nitrosylated in response to nitric oxide (NO). When two disulfide bonds are present in the protein, only Cys-73 is nitrosylated. Cys-73 can serve as donor for nitrosylation of target proteins.

It is found in the nucleus. It localises to the cytoplasm. The protein resides in the secreted. Functionally, participates in various redox reactions through the reversible oxidation of its active center dithiol to a disulfide and catalyzes dithiol-disulfide exchange reactions. Plays a role in the reversible S-nitrosylation of cysteine residues in target proteins, and thereby contributes to the response to intracellular nitric oxide. Nitrosylates the active site Cys of CASP3 in response to nitric oxide (NO), and thereby inhibits caspase-3 activity. Induces the FOS/JUN AP-1 DNA binding activity in ionizing radiation (IR) cells through its oxidation/reduction status and stimulates AP-1 transcriptional activity. This chain is Thioredoxin (TXN), found in Oryctolagus cuniculus (Rabbit).